A 304-amino-acid polypeptide reads, in one-letter code: Nucleotide-binding protein KRH_12070 (304 aa).

ATP is bound at residue 27–34 (GMSGAGRS). 78–81 (DVRG) lines the GTP pocket.

The protein belongs to the RapZ-like family.

In terms of biological role, displays ATPase and GTPase activities. The protein is Nucleotide-binding protein KRH_12070 of Kocuria rhizophila (strain ATCC 9341 / DSM 348 / NBRC 103217 / DC2201).